Consider the following 258-residue polypeptide: Ribosomal RNA small subunit methyltransferase A (258 aa).

The S-adenosyl-L-methionine site is built by His13, Leu15, Gly41, Asp63, Asp87, and Asn106.

The protein belongs to the class I-like SAM-binding methyltransferase superfamily. rRNA adenine N(6)-methyltransferase family. RsmA subfamily.

The protein localises to the cytoplasm. The catalysed reaction is adenosine(1518)/adenosine(1519) in 16S rRNA + 4 S-adenosyl-L-methionine = N(6)-dimethyladenosine(1518)/N(6)-dimethyladenosine(1519) in 16S rRNA + 4 S-adenosyl-L-homocysteine + 4 H(+). In terms of biological role, specifically dimethylates two adjacent adenosines (A1518 and A1519) in the loop of a conserved hairpin near the 3'-end of 16S rRNA in the 30S particle. May play a critical role in biogenesis of 30S subunits. This is Ribosomal RNA small subunit methyltransferase A from Cytophaga hutchinsonii (strain ATCC 33406 / DSM 1761 / CIP 103989 / NBRC 15051 / NCIMB 9469 / D465).